The chain runs to 218 residues: MESENAEAENVVTGNLEAKSKEGKNMQFVTLSSAWSLQALSSLLNPEEEDGFDFEQGQCSFTIGAMGPGNIGPPKAKESKAIPEPRSDESENIWNPEEVPEGAEHDDIWDVREIPDYEIVFQQTVGTEDVYLGLTRKDPSTACCQELVVKIKLPNTNPSEIQIDIQEMLLDLRTPRKKLLVNFPQPVERNSARASYIWEAETLEVRMTVQRDLDFNIS.

The disordered stretch occupies residues 66 to 103; that stretch reads MGPGNIGPPKAKESKAIPEPRSDESENIWNPEEVPEGA. A compositionally biased stretch (basic and acidic residues) spans 75 to 89; sequence KAKESKAIPEPRSDE.

It belongs to the PIH1 family. In terms of assembly, interacts with HSPA1A/B, HSP90AA1 and DNAI2. Interacts with DNAAF2 and DNAAF4. In terms of tissue distribution, specifically expressed in testis. Detected in pachytene spermatocytes from 5 weeks of age and in pachytene and diplotene spermatocytes of adult mice. Not detected in spermatids or mature sperm.

It localises to the cytoplasm. It is found in the golgi apparatus. The protein resides in the trans-Golgi network. In terms of biological role, plays a role in cytoplasmic pre-assembly of axonemal dynein. The protein is Dynein axonemal assembly factor 6 of Mus musculus (Mouse).